The following is a 450-amino-acid chain: Keratin, type I cytoskeletal 25 (450 aa).

Positions 1–24 (MSLRLPSGSRRASPRPTTGSLRLS) are disordered. The tract at residues 1-78 (MSLRLPSGSR…MNEGGLLSGN (78 aa)) is head. Positions 79–114 (EKVTMQNLNDRLASYLENVRALEEANADLEQKIKGW) are coil 1A. The IF rod domain occupies 79–394 (EKVTMQNLND…LLIGGDDGAC (316 aa)). The interval 115-136 (YEKFGPGSCRGLDHDYSRYFPI) is linker 1. The coil 1B stretch occupies residues 137–228 (IEDLKNQIIA…KNHKEEMQVL (92 aa)). The segment at 229 to 251 (QCAAGGNVNVEMNAAPGVDLTVL) is linker 12. Residues 252–390 (LNNMRAEYEA…ETYCLLIGGD (139 aa)) are coil 2. Residues 391-450 (DGACKSGGYKSKDYAAGNMGNQMKDPIKAIVVKKVLEEVDQRSKILTTRLHSLEEKSQSN) form a tail region. Ser442 is subject to Phosphoserine.

This sequence belongs to the intermediate filament family. In terms of assembly, heterodimer of a type I and a type II keratin. Heterodimer with type II keratin KRT5 leading to the formation of keratin intermediate filament (KIF) network. Interacts with KRT6A to form filaments.

The protein localises to the cytoplasm. Essential for the proper assembly of type I and type II keratin protein complexes and formation of keratin intermediate filaments in the inner root sheath (irs). Plays a role in the cytoskeleton organization. The protein is Keratin, type I cytoskeletal 25 of Capra hircus (Goat).